The following is an 880-amino-acid chain: Potassium/sodium hyperpolarization-activated cyclic nucleotide-gated channel 1 (880 aa).

The tract at residues 1–80 is disordered; the sequence is MEGGGKPNSS…SAGGLEDAEG (80 aa). Residues 1-136 are Cytoplasmic-facing; the sequence is MEGGGKPNSS…WIIHSYSDFR (136 aa). Residues 8-34 are compositionally biased toward low complexity; it reads NSSSNSRDDGNSVFPAKAPATGAGPAA. Residues 62 to 71 show a composition bias toward gly residues; it reads DGGGGGGEES. The helical transmembrane segment at 137–158 threads the bilayer; it reads FYWDLIMLIMMVGNLVIIPVGI. Residues 159–167 are Extracellular-facing; that stretch reads TFFTEQTTT. Residues 168-188 traverse the membrane as a helical segment; that stretch reads PWIIFNVASDTVFLLDLIMNF. The Cytoplasmic segment spans residues 189–209; the sequence is RTGTVNEDSSEIILDPKVIKM. Residues 210–230 form a helical membrane-spanning segment; the sequence is NYLKSWFVVDFISSIPVDYIF. The Extracellular segment spans residues 231–254; sequence LIVEKGMDSEVYKTARALRIVRFT. The chain crosses the membrane as a helical; Voltage-sensor span at residues 255 to 275; the sequence is KILSLLRLLRLSRLIRYIHQW. The Cytoplasmic segment spans residues 276–289; it reads EEIFHMTYDLASAV. A helical transmembrane segment spans residues 290 to 312; it reads VRIFNLIGMMLLLCHWDGCLQFL. Residues 313-338 are Extracellular-facing; sequence VPLLQDFPPDCWVSLNEMVNDSWGKQ. Asn-332 carries N-linked (GlcNAc...) asparagine glycosylation. An intramembrane region (pore-forming) is located at residues 339–360; it reads YSYALFKAMSHMLCIGYGAQAP. The Selectivity filter signature appears at 352-356; that stretch reads CIGYG. The Extracellular segment spans residues 361–365; the sequence is VSMSD. A helical membrane pass occupies residues 366–386; the sequence is LWITMLSMIVGATCYAMFVGH. Topologically, residues 387 to 880 are cytoplasmic; it reads ATALIQSLDS…AEKPRFASNL (494 aa). 3',5'-cyclic AMP contacts are provided by Gly-533, Glu-534, Cys-536, Arg-543, Thr-544, Arg-584, and Arg-587. Over residues 641–664 the composition is skewed to polar residues; sequence LNSTSSTATPTSRMRTQSPPVYTA. 3 disordered regions span residues 641–686, 718–786, and 835–880; these read LNST…QPSA, ASQL…LPHE, and MSSG…ASNL. Composition is skewed to low complexity over residues 665 to 685 and 725 to 738; these read TSLS…PQPS and PQQQ…QTQP. The segment covering 760–770 has biased composition (polar residues); that stretch reads STQALPNTSLT. The segment covering 844 to 855 has biased composition (pro residues); it reads RGVPPAPPPPAA. Basic and acidic residues predominate over residues 870 to 880; that stretch reads EAEKPRFASNL.

The protein belongs to the potassium channel HCN family. As to quaternary structure, homotetramer. Heterotetramer with HCN2. The potassium channel is composed of a homo- or heterotetrameric complex of pore-forming subunits. Interacts with KCNE2. Interacts with the SH3 domain of CSK. In terms of tissue distribution, detected in myocytes in heart sinoatrial node (SAN) and in brain, in particular in the granule cell layer and in Purkinje neuron bodies in the cerebellum.

It is found in the cell membrane. The catalysed reaction is Na(+)(in) = Na(+)(out). It carries out the reaction K(+)(in) = K(+)(out). Activated by cAMP. cAMP binding promotes tetramerization and formation of an active channel. Compared to other family members, cAMP has less stimulatory effect on HCN1 because part of the molecules already contain bound cAMP and form homotetramers when cAMP levels are low, this inherent tetramerization in HCN1 results in a weaker response to increased cAMP. In terms of biological role, hyperpolarization-activated ion channel that are permeable to sodium and potassium ions. Exhibits weak selectivity for potassium over sodium ions. Contributes to the native pacemaker currents in heart (If) and in neurons (Ih). Participates in cerebellar mechanisms of motor learning. May mediate responses to sour stimuli. This Oryctolagus cuniculus (Rabbit) protein is Potassium/sodium hyperpolarization-activated cyclic nucleotide-gated channel 1 (HCN1).